A 338-amino-acid chain; its full sequence is Serpentine receptor class alpha-32 (338 aa).

7 helical membrane passes run 30-50 (VYVI…IHAI), 63-83 (ITHL…SYTI), 120-140 (RFLF…VILF), 152-172 (GEIL…LLHL), 199-219 (LTSY…MMWY), 249-269 (LNSL…FVLA), and 289-309 (TTPY…QWIG).

This sequence belongs to the nematode receptor-like protein sra family.

Its subcellular location is the membrane. The sequence is that of Serpentine receptor class alpha-32 (sra-32) from Caenorhabditis elegans.